The sequence spans 60 residues: Large ribosomal subunit protein uL30 (60 aa).

Belongs to the universal ribosomal protein uL30 family. In terms of assembly, part of the 50S ribosomal subunit.

This Lactobacillus johnsonii (strain CNCM I-12250 / La1 / NCC 533) protein is Large ribosomal subunit protein uL30.